A 428-amino-acid polypeptide reads, in one-letter code: Enolase (428 aa).

Position 162 (glutamine 162) interacts with (2R)-2-phosphoglycerate. The active-site Proton donor is glutamate 204. 3 residues coordinate Mg(2+): aspartate 241, glutamate 283, and aspartate 310. 4 residues coordinate (2R)-2-phosphoglycerate: lysine 335, arginine 364, serine 365, and lysine 386. Residue lysine 335 is the Proton acceptor of the active site.

This sequence belongs to the enolase family. It depends on Mg(2+) as a cofactor.

It is found in the cytoplasm. The protein localises to the secreted. The protein resides in the cell surface. It carries out the reaction (2R)-2-phosphoglycerate = phosphoenolpyruvate + H2O. It participates in carbohydrate degradation; glycolysis; pyruvate from D-glyceraldehyde 3-phosphate: step 4/5. In terms of biological role, catalyzes the reversible conversion of 2-phosphoglycerate (2-PG) into phosphoenolpyruvate (PEP). It is essential for the degradation of carbohydrates via glycolysis. The polypeptide is Enolase (Rhodococcus jostii (strain RHA1)).